The sequence spans 377 residues: Chaperone protein DnaJ (377 aa).

The J domain occupies 5-69; sequence EYYDRLGLSK…QKRAAYDQYG (65 aa). The segment at 133–215 adopts a CR-type zinc-finger fold; the sequence is GAEKEIHYNR…CHGTGREKQS (83 aa). Zn(2+) is bound by residues cysteine 146, cysteine 149, cysteine 163, cysteine 166, cysteine 189, cysteine 192, cysteine 203, and cysteine 206. 4 CXXCXGXG motif repeats span residues 146 to 153, 163 to 170, 189 to 196, and 203 to 210; these read CKTCSGSG, CGRCHGHG, CDVCHGTG, and CQTCHGTG.

Belongs to the DnaJ family. As to quaternary structure, homodimer. Requires Zn(2+) as cofactor.

It localises to the cytoplasm. Participates actively in the response to hyperosmotic and heat shock by preventing the aggregation of stress-denatured proteins and by disaggregating proteins, also in an autonomous, DnaK-independent fashion. Unfolded proteins bind initially to DnaJ; upon interaction with the DnaJ-bound protein, DnaK hydrolyzes its bound ATP, resulting in the formation of a stable complex. GrpE releases ADP from DnaK; ATP binding to DnaK triggers the release of the substrate protein, thus completing the reaction cycle. Several rounds of ATP-dependent interactions between DnaJ, DnaK and GrpE are required for fully efficient folding. Also involved, together with DnaK and GrpE, in the DNA replication of plasmids through activation of initiation proteins. The sequence is that of Chaperone protein DnaJ from Streptococcus thermophilus (strain CNRZ 1066).